A 630-amino-acid chain; its full sequence is Forkhead box protein O (630 aa).

The interval 1 to 45 is disordered; it reads MDGFVQEWSNLPRSDNGLHMDQLVGELPTDGGFEPQTRARSNTWP. Residue Thr-43 is modified to Phosphothreonine; by PKB/AKT1. A DNA-binding region (fork-head) is located at residues 92–198; the sequence is WGNLSYADLI…ETSRYEKRRG (107 aa). Residue Ser-187 is modified to Phosphoserine; by PKB/AKT1. A disordered region spans residues 214-260; the sequence is GLNDATPSPSSSVSEGLDHFPESPLHSGGFQLSPDFRQRASSNASSC. A compositionally biased stretch (polar residues) spans 218 to 227; that stretch reads ATPSPSSSVS. The residue at position 255 (Ser-255) is a Phosphoserine; by PKB/AKT1. A phosphoserine mark is found at Ser-258, Ser-259, and Ser-264. Disordered stretches follow at residues 318 to 379 and 403 to 432; these read SAAS…QQQQ and TRDGLSPNSVTTTMSPAYPNSEPSSDSLNT. Composition is skewed to low complexity over residues 332-350 and 367-379; these read QQQQQQQQQQAQQQSQLPQ and QPQAQQQQQQQQQ. Composition is skewed to polar residues over residues 408-417 and 423-432; these read SPNSVTTTMS and SEPSSDSLNT.

Interacts with melt.

The protein localises to the cytoplasm. It localises to the nucleus. In terms of biological role, transcription factor involved in the regulation of the insulin signaling pathway. Consistently activates both the downstream target Thor\d4EBP and the feedback control target InR. Involved in negative regulation of the cell cycle, modulating cell growth and proliferation. In response to cellular stresses, such as nutrient deprivation or increased levels of reactive oxygen species, foxo is activated and inhibits growth through the action of target genes such as Thor. Foxo activated in the adult fat body can regulate lifespan in adults; an insulin peptide itself may function as one secondary messenger of insulin-regulated aging. Also regulates Lip4, homolog of human acid lipases, thereby acting as a key modulator of lipid metabolism by insulin signaling and integrates insulin responses to glucose and lipid homeostasis. This chain is Forkhead box protein O, found in Drosophila grimshawi (Hawaiian fruit fly).